Consider the following 145-residue polypeptide: Large ribosomal subunit protein uL16 (145 aa).

Basic and acidic residues predominate over residues 76–95 (PKTKTPAETRMGKGKGEPEH). The segment at 76–97 (PKTKTPAETRMGKGKGEPEHFV) is disordered.

It belongs to the universal ribosomal protein uL16 family. In terms of assembly, part of the 50S ribosomal subunit.

Functionally, binds 23S rRNA and is also seen to make contacts with the A and possibly P site tRNAs. The polypeptide is Large ribosomal subunit protein uL16 (Salinibacter ruber (strain DSM 13855 / M31)).